Here is a 913-residue protein sequence, read N- to C-terminus: DNA polymerase I (913 aa).

One can recognise a 5'-3' exonuclease domain in the interval 1–305 (MSQAPLVLVD…AGENGEAETP (305 aa)). The 3'-5' exonuclease domain occupies 306–501 (IQAEVDYDVV…LHQALWQKLE (196 aa)). Residues 505–913 (SLARVLTDIE…GVGSNWDEAH (409 aa)) are polymerase.

This sequence belongs to the DNA polymerase type-A family. In terms of assembly, single-chain monomer with multiple functions.

The enzyme catalyses DNA(n) + a 2'-deoxyribonucleoside 5'-triphosphate = DNA(n+1) + diphosphate. Its function is as follows. In addition to polymerase activity, this DNA polymerase exhibits 3'-5' and 5'-3' exonuclease activity. This chain is DNA polymerase I (polA), found in Pseudomonas aeruginosa (strain ATCC 15692 / DSM 22644 / CIP 104116 / JCM 14847 / LMG 12228 / 1C / PRS 101 / PAO1).